A 474-amino-acid polypeptide reads, in one-letter code: tRNA-2-methylthio-N(6)-dimethylallyladenosine synthase (474 aa).

Residues K3–R120 enclose the MTTase N-terminal domain. [4Fe-4S] cluster-binding residues include C12, C49, C83, C157, C161, and C164. The region spanning R143 to R375 is the Radical SAM core domain. Residues R378–R441 enclose the TRAM domain.

It belongs to the methylthiotransferase family. MiaB subfamily. In terms of assembly, monomer. Requires [4Fe-4S] cluster as cofactor.

It is found in the cytoplasm. It carries out the reaction N(6)-dimethylallyladenosine(37) in tRNA + (sulfur carrier)-SH + AH2 + 2 S-adenosyl-L-methionine = 2-methylsulfanyl-N(6)-dimethylallyladenosine(37) in tRNA + (sulfur carrier)-H + 5'-deoxyadenosine + L-methionine + A + S-adenosyl-L-homocysteine + 2 H(+). Its function is as follows. Catalyzes the methylthiolation of N6-(dimethylallyl)adenosine (i(6)A), leading to the formation of 2-methylthio-N6-(dimethylallyl)adenosine (ms(2)i(6)A) at position 37 in tRNAs that read codons beginning with uridine. The sequence is that of tRNA-2-methylthio-N(6)-dimethylallyladenosine synthase from Shewanella baltica (strain OS185).